The primary structure comprises 910 residues: Seizure 6-like protein 2 (910 aa).

Residues 1–27 (MGTPKAQHPPPSQLLLLILLSCAWIEG) form the signal peptide. Topologically, residues 28–844 (LPLKEDEMMP…DPSRQLEGGN (817 aa)) are extracellular. Positions 70–152 (PGSDPDPTLA…PLRPEGGEEE (83 aa)) are disordered. Residues 123–145 (LTPPPGTTAPPPPGPASPVPPLR) are compositionally biased toward pro residues. Cysteines 173 and 202 form a disulfide. Positions 173–286 (CNNNISEGEG…NGFRIHYQAY (114 aa)) constitute a CUB 1 domain. N-linked (GlcNAc...) asparagine glycosylation occurs at asparagine 222. Residues 288–347 (LSCGFPPRPAHGDVSVTDLHPGGTATFHCDSGYQLQGEETLICLNGTRPAWTGEPPSCTA) form the Sushi 1 domain. Disulfide bonds link cysteine 290-cysteine 330, cysteine 316-cysteine 345, cysteine 349-cysteine 376, cysteine 464-cysteine 508, cysteine 491-cysteine 523, cysteine 527-cysteine 553, cysteine 644-cysteine 686, cysteine 672-cysteine 699, cysteine 705-cysteine 747, cysteine 733-cysteine 764, cysteine 771-cysteine 813, and cysteine 799-cysteine 828. Residues asparagine 332, asparagine 373, asparagine 473, and asparagine 517 are each glycosylated (N-linked (GlcNAc...) asparagine). The CUB 2 domain maps to 349-459 (CGGTIHNATL…LLLSLRFEAF (111 aa)). Positions 462-525 (DRCFPPFLAH…WNDTEPACKA (64 aa)) constitute a Sushi 2 domain. Residues 527–638 (CGGELSEPAG…QGFVLHFKEV (112 aa)) form the CUB 3 domain. Sushi domains follow at residues 642-701 (DTCP…ACQK), 703-766 (MTCA…KCAL), and 769-830 (EPCL…LCKV). A helical membrane pass occupies residues 845–865 (LALAILLPLGLVIVLGIGVYI). Over 866–910 (YYTKLQGKSLFGFSGSHSYSPITVESDFSNPLYEAGDTREYEVSI) the chain is Cytoplasmic.

This sequence belongs to the SEZ6 family. Expressed exclusively in the brain, predominantly in the neurons. Wide expression in the gray matter of the brain with high levels in the olfactory bulb, anterior olfactory nuclei, hippocampal formation and cerebellar cortex. Detected diffusely and weakly in the white matter, such as the corpus callosum and cerebellar medulla. In the cerebellar cortex, intensely expressed in Purkinje cells (PC) and granule cells. Detected also in interneurons in the molecular layer. Up-regulated at two weeks after birth.

Its subcellular location is the cell membrane. It is found in the endoplasmic reticulum membrane. In terms of biological role, may contribute to specialized endoplasmic reticulum functions in neurons. In Mus musculus (Mouse), this protein is Seizure 6-like protein 2 (Sez6l2).